Here is a 498-residue protein sequence, read N- to C-terminus: Glycerol kinase (498 aa).

Residue Thr-12 coordinates ADP. ATP is bound by residues Thr-12, Thr-13, and Ser-14. A sn-glycerol 3-phosphate-binding site is contributed by Thr-12. Residue Arg-16 participates in ADP binding. Sn-glycerol 3-phosphate is bound by residues Arg-82, Glu-83, Tyr-134, and Asp-243. Glycerol-binding residues include Arg-82, Glu-83, Tyr-134, Asp-243, and Gln-244. 2 residues coordinate ADP: Thr-265 and Gly-308. ATP-binding residues include Thr-265, Gly-308, Gln-312, and Gly-409. 2 residues coordinate ADP: Gly-409 and Asn-413.

Belongs to the FGGY kinase family. In terms of assembly, homotetramer and homodimer (in equilibrium).

It carries out the reaction glycerol + ATP = sn-glycerol 3-phosphate + ADP + H(+). Its pathway is polyol metabolism; glycerol degradation via glycerol kinase pathway; sn-glycerol 3-phosphate from glycerol: step 1/1. Activated by phosphorylation and inhibited by fructose 1,6-bisphosphate (FBP). Functionally, key enzyme in the regulation of glycerol uptake and metabolism. Catalyzes the phosphorylation of glycerol to yield sn-glycerol 3-phosphate. This Clostridium botulinum (strain Langeland / NCTC 10281 / Type F) protein is Glycerol kinase.